A 240-amino-acid chain; its full sequence is Pyridoxine 5'-phosphate synthase (240 aa).

Residue Asn-7 coordinates 3-amino-2-oxopropyl phosphate. 9-10 (DH) is a binding site for 1-deoxy-D-xylulose 5-phosphate. 3-amino-2-oxopropyl phosphate is bound at residue Arg-18. The active-site Proton acceptor is His-43. Positions 45 and 50 each coordinate 1-deoxy-D-xylulose 5-phosphate. Glu-70 serves as the catalytic Proton acceptor. Thr-100 serves as a coordination point for 1-deoxy-D-xylulose 5-phosphate. The Proton donor role is filled by His-191. 3-amino-2-oxopropyl phosphate is bound by residues Gly-192 and 213–214 (GH).

It belongs to the PNP synthase family. Homooctamer; tetramer of dimers.

It localises to the cytoplasm. It catalyses the reaction 3-amino-2-oxopropyl phosphate + 1-deoxy-D-xylulose 5-phosphate = pyridoxine 5'-phosphate + phosphate + 2 H2O + H(+). The protein operates within cofactor biosynthesis; pyridoxine 5'-phosphate biosynthesis; pyridoxine 5'-phosphate from D-erythrose 4-phosphate: step 5/5. Catalyzes the complicated ring closure reaction between the two acyclic compounds 1-deoxy-D-xylulose-5-phosphate (DXP) and 3-amino-2-oxopropyl phosphate (1-amino-acetone-3-phosphate or AAP) to form pyridoxine 5'-phosphate (PNP) and inorganic phosphate. The chain is Pyridoxine 5'-phosphate synthase from Gloeothece citriformis (strain PCC 7424) (Cyanothece sp. (strain PCC 7424)).